A 156-amino-acid chain; its full sequence is MNLNLTLIGQAIAFAVFVWFCMKFVWPPVMQALQERQKKIADGLDAASRATRDLELAQEQAAEQLKESKEQAAQIIEQAHKRANQMIEEARDNARLEGERMIESARGEIEQETQRAKEELRTQVAALAIQGAERILDSSIDEAKHRELVDKLAAEL.

The chain crosses the membrane as a helical span at residues 5-25 (LTLIGQAIAFAVFVWFCMKFV).

Belongs to the ATPase B chain family. In terms of assembly, F-type ATPases have 2 components, F(1) - the catalytic core - and F(0) - the membrane proton channel. F(1) has five subunits: alpha(3), beta(3), gamma(1), delta(1), epsilon(1). F(0) has three main subunits: a(1), b(2) and c(10-14). The alpha and beta chains form an alternating ring which encloses part of the gamma chain. F(1) is attached to F(0) by a central stalk formed by the gamma and epsilon chains, while a peripheral stalk is formed by the delta and b chains.

The protein localises to the cell inner membrane. In terms of biological role, f(1)F(0) ATP synthase produces ATP from ADP in the presence of a proton or sodium gradient. F-type ATPases consist of two structural domains, F(1) containing the extramembraneous catalytic core and F(0) containing the membrane proton channel, linked together by a central stalk and a peripheral stalk. During catalysis, ATP synthesis in the catalytic domain of F(1) is coupled via a rotary mechanism of the central stalk subunits to proton translocation. Functionally, component of the F(0) channel, it forms part of the peripheral stalk, linking F(1) to F(0). This is ATP synthase subunit b from Chromohalobacter salexigens (strain ATCC BAA-138 / DSM 3043 / CIP 106854 / NCIMB 13768 / 1H11).